We begin with the raw amino-acid sequence, 506 residues long: MEEFKRNLELDRSQQHDFIYPLIFQEYIYALAHDRGLNRSIFLENTGYENKSSLLIVKRLITHLITQMYQQNHFLFSGNDSNQNKFLGYNTNLYSQMIFGGFAVVVEIPFYLRLLSFLEAKERVKSHNLRSIHSIFPFLEDKFSHLVYVLDILISHPIHLEIVIQTLRYWVKDASSLHLLRFFLHEYPIWNSLITPKKSSFSFSIRNQRFFLFLYNFHVCEYESIFVFLRNQSSHLRSISSETFLERISFYRKIELEVFTKDFKAIIWVFKEPFLHYVRYRGKAILASKGTSLLMNKWKYYLVNFWQCYFYMWSQPRRIHINQLSNHSLDFLGYLSTVRLKPLMVRSQMIENSFIIGNASKKFDTLMPITPMIGSLSKAKFCNVLGHPMSKPVWAALSDSDIIERFGRIYRNLSHYYSGSLKKMSLYRIKYILRLSCARTLARKHKSTVRAFLKRLGVGLLEEFFTEEEQVFYLTFAKASSNSGELYRRRVWYLDIICINDLANYE.

The protein belongs to the intron maturase 2 family. MatK subfamily.

The protein resides in the plastid. It localises to the chloroplast. In terms of biological role, usually encoded in the trnK tRNA gene intron. Probably assists in splicing its own and other chloroplast group II introns. The polypeptide is Maturase K (Rhododendron hippophaeoides (Rhododendron)).